We begin with the raw amino-acid sequence, 935 residues long: Epstein-Barr nuclear antigen 3 (935 aa).

Disordered stretches follow at residues 1–89, 342–373, 399–446, 611–634, and 883–908; these read MDKD…DLPG, HVEG…VSRG, TEQG…VPEP, KQAS…MEGP, and HGRP…DHEP. Residues 10–19 are compositionally biased toward acidic residues; the sequence is ALDDNMEEEV. Residues 20-29 are compositionally biased toward polar residues; it reads PSTSVVQEQV. Residues 352 to 366 show a composition bias toward acidic residues; the sequence is EESEDTESDGDDEDL. The span at 399–410 shows a compositional bias: basic and acidic residues; it reads TEQGKEVLEKAR. Residues 431 to 440 show a composition bias toward polar residues; sequence SDETATSHGS. Over residues 615–630 the composition is skewed to low complexity; it reads VEVQPPQVTQVSPQQP.

Belongs to the herpesviridae EBNA-3 family. As to quaternary structure, interacts with human UCKL1. Interacts with host CTPB1; this interaction seems important for EBNA3-mediated transcriptional repression. Interacts with host RBPJ. Interacts with host USP12 and WDR48; these interactions form a deubiquitination-competent complex.

It is found in the host nucleus matrix. In terms of biological role, plays an essential role for activation and immortalization of human B-cells. Represses transcription of viral promoters TP1 and Cp through interaction with host RBPJ, and inhibits EBNA2-mediated activation of these promoters. Since Cp is the promoter for all EBNA mRNAs, EBNA3A probably contributes to a negative autoregulatory control loop. The sequence is that of Epstein-Barr nuclear antigen 3 (EBNA3) from Homo sapiens (Human).